The primary structure comprises 151 residues: 3-dehydroquinate dehydratase (151 aa).

The active-site Proton acceptor is the Tyr24. Residues Asn76, His82, and Asp89 each contribute to the substrate site. The active-site Proton donor is the His102. Substrate is bound by residues 103–104 and Arg113; that span reads VS.

The protein belongs to the type-II 3-dehydroquinase family. Homododecamer.

It catalyses the reaction 3-dehydroquinate = 3-dehydroshikimate + H2O. It participates in metabolic intermediate biosynthesis; chorismate biosynthesis; chorismate from D-erythrose 4-phosphate and phosphoenolpyruvate: step 3/7. Functionally, catalyzes a trans-dehydration via an enolate intermediate. In Rhodopseudomonas palustris (strain HaA2), this protein is 3-dehydroquinate dehydratase.